The primary structure comprises 632 residues: Armadillo repeat-containing X-linked protein 2 (632 aa).

The Mitochondrial intermembrane segment spans residues 1 to 6; sequence MSRVRD. A mitochondrion outer membrane (MOM)-targeting sequence region spans residues 1–6; that stretch reads MSRVRD. The chain crosses the membrane as a helical; Signal-anchor span at residues 7–25; sequence AGCVAAGIVIGAGAWYCVY. A mitochondrion outer membrane (MOM)-targeting sequence region spans residues 26 to 40; sequence KYTRGRDQTKKRMAK. The Cytoplasmic segment spans residues 26 to 632; the sequence is KYTRGRDQTK…VKVIKLVNKF (607 aa). Disordered stretches follow at residues 68 to 124, 160 to 304, and 335 to 369; these read GFSP…AGVG, APKV…KVEV, and VPDS…RPVA. Composition is skewed to low complexity over residues 86 to 120 and 211 to 241; these read EASA…EADG and VASP…SPGT. Residues 336–356 show a composition bias toward acidic residues; it reads PDSEEGESGWTDTESDSDSEP. ARM repeat units follow at residues 376 to 416, 418 to 457, and 498 to 537; these read PYEI…NNAN, SCNQ…NLSE, and ITND…NFAE.

Belongs to the eutherian X-chromosome-specific Armcx family. As to expression, expressed at high levels ovary, heart, testis, prostate, brain, spleen and colon. Expressed at very low levels in liver and thymus. Not expressed in peripheral blood leukocytes. Not expressed in pancreas and ovarian carcinomas.

It is found in the mitochondrion. The protein resides in the mitochondrion outer membrane. In terms of biological role, may regulate the dynamics and distribution of mitochondria in neural cells. The chain is Armadillo repeat-containing X-linked protein 2 (ARMCX2) from Homo sapiens (Human).